A 342-amino-acid polypeptide reads, in one-letter code: tRNA dimethylallyltransferase (342 aa).

Residues 1–30 (MSANGPAAEPADGGRAVPAGGGEAVPAGGG) are disordered. Over residues 19–30 (AGGGEAVPAGGG) the composition is skewed to gly residues. 49–56 (GPTAAGKS) lines the ATP pocket. A substrate-binding site is contributed by 51-56 (TAAGKS). The tract at residues 74 to 77 (DSMQ) is interaction with substrate tRNA.

Belongs to the IPP transferase family. Monomer. It depends on Mg(2+) as a cofactor.

The catalysed reaction is adenosine(37) in tRNA + dimethylallyl diphosphate = N(6)-dimethylallyladenosine(37) in tRNA + diphosphate. Its function is as follows. Catalyzes the transfer of a dimethylallyl group onto the adenine at position 37 in tRNAs that read codons beginning with uridine, leading to the formation of N6-(dimethylallyl)adenosine (i(6)A). This chain is tRNA dimethylallyltransferase, found in Salinispora arenicola (strain CNS-205).